The primary structure comprises 251 residues: Ubiquinone/menaquinone biosynthesis C-methyltransferase UbiE (251 aa).

S-adenosyl-L-methionine-binding positions include threonine 74, aspartate 95, 123–124, and serine 140; that span reads NA.

It belongs to the class I-like SAM-binding methyltransferase superfamily. MenG/UbiE family.

The catalysed reaction is a 2-demethylmenaquinol + S-adenosyl-L-methionine = a menaquinol + S-adenosyl-L-homocysteine + H(+). It catalyses the reaction a 2-methoxy-6-(all-trans-polyprenyl)benzene-1,4-diol + S-adenosyl-L-methionine = a 5-methoxy-2-methyl-3-(all-trans-polyprenyl)benzene-1,4-diol + S-adenosyl-L-homocysteine + H(+). The protein operates within quinol/quinone metabolism; menaquinone biosynthesis; menaquinol from 1,4-dihydroxy-2-naphthoate: step 2/2. It functions in the pathway cofactor biosynthesis; ubiquinone biosynthesis. Its function is as follows. Methyltransferase required for the conversion of demethylmenaquinol (DMKH2) to menaquinol (MKH2) and the conversion of 2-polyprenyl-6-methoxy-1,4-benzoquinol (DDMQH2) to 2-polyprenyl-3-methyl-6-methoxy-1,4-benzoquinol (DMQH2). The protein is Ubiquinone/menaquinone biosynthesis C-methyltransferase UbiE of Escherichia fergusonii (strain ATCC 35469 / DSM 13698 / CCUG 18766 / IAM 14443 / JCM 21226 / LMG 7866 / NBRC 102419 / NCTC 12128 / CDC 0568-73).